The primary structure comprises 1026 residues: Exportin-T (1026 aa).

It belongs to the exportin family.

It localises to the nucleus. It is found in the cytoplasm. In terms of biological role, tRNA nucleus export receptor which facilitates tRNA translocation across the nuclear pore complex. Involved in pre-tRNA splicing, probably by affecting the interaction of pre-tRNA with splicing endonuclease. This chain is Exportin-T (los1), found in Neurospora crassa (strain ATCC 24698 / 74-OR23-1A / CBS 708.71 / DSM 1257 / FGSC 987).